Consider the following 425-residue polypeptide: Histidine--tRNA ligase (425 aa).

It belongs to the class-II aminoacyl-tRNA synthetase family. As to quaternary structure, homodimer.

It is found in the cytoplasm. It carries out the reaction tRNA(His) + L-histidine + ATP = L-histidyl-tRNA(His) + AMP + diphosphate + H(+). This Aeromonas hydrophila subsp. hydrophila (strain ATCC 7966 / DSM 30187 / BCRC 13018 / CCUG 14551 / JCM 1027 / KCTC 2358 / NCIMB 9240 / NCTC 8049) protein is Histidine--tRNA ligase.